We begin with the raw amino-acid sequence, 284 residues long: 4-hydroxybenzoate octaprenyltransferase (284 aa).

9 consecutive transmembrane segments (helical) span residues 19–39 (IGSL…AQGL), 42–62 (LRVL…GCVI), 93–113 (LLLF…MNTL), 114–134 (TIQL…MKRF), 136–156 (HLPQ…AWAA), 158–178 (ANTL…WTIA), 210–230 (IIGL…QGLA), 233–253 (TSYY…QHLI), and 264–284 (AFLN…LSVW).

This sequence belongs to the UbiA prenyltransferase family. It depends on Mg(2+) as a cofactor.

It localises to the cell inner membrane. It catalyses the reaction all-trans-octaprenyl diphosphate + 4-hydroxybenzoate = 4-hydroxy-3-(all-trans-octaprenyl)benzoate + diphosphate. It functions in the pathway cofactor biosynthesis; ubiquinone biosynthesis. Its function is as follows. Catalyzes the prenylation of para-hydroxybenzoate (PHB) with an all-trans polyprenyl group. Mediates the second step in the final reaction sequence of ubiquinone-8 (UQ-8) biosynthesis, which is the condensation of the polyisoprenoid side chain with PHB, generating the first membrane-bound Q intermediate 3-octaprenyl-4-hydroxybenzoate. The protein is 4-hydroxybenzoate octaprenyltransferase of Vibrio cholerae serotype O1 (strain ATCC 39541 / Classical Ogawa 395 / O395).